Reading from the N-terminus, the 617-residue chain is Electron transfer flavoprotein-ubiquinone oxidoreductase, mitochondrial (617 aa).

Residues 1–33 constitute a mitochondrion transit peptide; the sequence is MLVPLAKLSCLAYQCFHALKIKKNYLPLCATRW. 71-85 is a binding site for FAD; it reads VVIVGAGPAGLSAAV. Position 96 is an N6-acetyllysine (lysine 96). Residues 109 to 130 lie within the membrane without spanning it; that stretch reads IGAHTLSGACLDPGAFKELFPD. Residues lysine 132 and lysine 223 each carry the N6-acetyllysine modification. A ubiquinone-binding residues include glycine 305 and glycine 306. Lysine 357 carries the post-translational modification N6-acetyllysine. Residues 428-447 lie within the membrane without spanning it; that stretch reads IGLHVTEYEDNLKNSWVWKE. Serine 551 carries the phosphoserine modification. The [4Fe-4S] cluster site is built by cysteine 561, cysteine 586, cysteine 589, and cysteine 592. Positions 577–606 constitute a 4Fe-4S ferredoxin-type domain; sequence FRLQINAQNCVHCKTCDIKDPSQNINWVVP.

The protein belongs to the ETF-QO/FixC family. Monomer. The cofactor is [4Fe-4S] cluster. It depends on FAD as a cofactor.

Its subcellular location is the mitochondrion inner membrane. The catalysed reaction is a ubiquinone + reduced [electron-transfer flavoprotein] = a ubiquinol + oxidized [electron-transfer flavoprotein] + H(+). Functionally, accepts electrons from ETF and reduces ubiquinone. This chain is Electron transfer flavoprotein-ubiquinone oxidoreductase, mitochondrial, found in Homo sapiens (Human).